The sequence spans 101 residues: Gamma-secretase subunit PEN-2 (101 aa).

Residues 1 to 17 (MNLERVSNEEKLNLCRK) lie on the Cytoplasmic side of the membrane. Positions 18 to 36 (YYLGGFAFLPFLWLVNIFW) form an intramembrane region, helical. Topologically, residues 37–57 (FFREAFIVPAYTEQSQIKGYV) are cytoplasmic. Residues 58 to 78 (WRSAVGFFLWVIVLSTWITIF) traverse the membrane as a helical segment. Residues 79 to 101 (QIYRPRWGALGDYLSFTIPLGTP) are Lumenal-facing.

Belongs to the PEN-2 family. As to quaternary structure, the functional gamma-secretase complex is composed of at least four polypeptides: a presenilin homodimer (PSEN1 or PSEN2), nicastrin (NCSTN), APH1 (APH1A or APH1B) and PSENEN.

The protein localises to the endoplasmic reticulum membrane. Its subcellular location is the golgi apparatus. It is found in the golgi stack membrane. It localises to the cell membrane. The protein resides in the membrane. Functionally, essential subunit of the gamma-secretase complex, an endoprotease complex that catalyzes the intramembrane cleavage of integral membrane proteins such as Notch receptors and APP (amyloid-beta precursor protein). The gamma-secretase complex plays a role in Notch and Wnt signaling cascades and regulation of downstream processes via its role in processing key regulatory proteins, and by regulating cytosolic CTNNB1 levels. PSENEN modulates both endoproteolysis of presenilin and gamma-secretase activity. The polypeptide is Gamma-secretase subunit PEN-2 (PSENEN) (Bos taurus (Bovine)).